A 91-amino-acid polypeptide reads, in one-letter code: Large ribosomal subunit protein bL27 (91 aa).

Positions 1–25 (MAHKKGAASSNNGRDSESKRLGVKR) are disordered.

This sequence belongs to the bacterial ribosomal protein bL27 family.

The polypeptide is Large ribosomal subunit protein bL27 (Corynebacterium kroppenstedtii (strain DSM 44385 / JCM 11950 / CIP 105744 / CCUG 35717)).